The following is a 568-amino-acid chain: Zinc finger protein 76 (568 aa).

K24 is covalently cross-linked (Glycyl lysine isopeptide (Lys-Gly) (interchain with G-Cter in SUMO2)). 3 repeat units span residues 34–45 (IQLEDGTTAYIH), 62–73 (VQLEDGSMAYIH), and 88–99 (VQLEDGSTAYIH). Residues 34 to 99 (IQLEDGTTAY…LEDGSTAYIH (66 aa)) form a 3 X 12 AA approximate repeats region. 7 C2H2-type zinc fingers span residues 165-189 (FRCG…ERAH), 195-219 (YRCD…VRTH), 225-249 (YKCP…VRTH), 255-279 (FRCP…VRTH), 285-309 (YTCP…VRIH), 315-339 (YVCT…HVVH), and 345-368 (YTCS…RSAH). The interval 365–402 (RSAHGELEATEESEQALYEQQQLEAASAAEESPPPKPT) is disordered. A compositionally biased stretch (low complexity) spans 379-395 (QALYEQQQLEAASAAEE).

This sequence belongs to the krueppel C2H2-type zinc-finger protein family.

It localises to the nucleus. Functionally, may be involved in transcriptional regulation. The sequence is that of Zinc finger protein 76 (Znf76) from Mus musculus (Mouse).